A 673-amino-acid chain; its full sequence is Protein kinase C delta type (673 aa).

Residues 1–106 form the C2 domain; the sequence is MAPFLRISFN…KNNGKAEFWL (106 aa). Phosphothreonine occurs at positions 43 and 50. The residue at position 64 (Tyr64) is a Phosphotyrosine. Ser130 carries the post-translational modification Phosphoserine. Residue Thr141 is modified to Phosphothreonine. Tyr155 carries the phosphotyrosine modification. Residues 158–208 form a Phorbol-ester/DAG-type 1 zinc finger; sequence NHEFIATFFGQPTFCSVCKEFVWGLNKQGYKCRQCNAAIHKKCIDKIIGRC. Thr218 carries the phosphothreonine modification. Residues 230–280 form a Phorbol-ester/DAG-type 2 zinc finger; that stretch reads PHRFKVYNYMSPTFCDHCGTLLWGLVKQGLKCEDCGMNVHHKCREKVANLC. Residue Ser299 is modified to Phosphoserine; by autocatalysis. Residues Tyr311 and Tyr332 each carry the phosphotyrosine; by SRC modification. The Protein kinase domain maps to 347 to 601; sequence FTFQKVLGKG…TGNIRLHPFF (255 aa). An ATP-binding site is contributed by 353–361; it reads LGKGSFGKV. Position 372 is a phosphotyrosine (Tyr372). Lys376 contributes to the ATP binding site. Residue Thr449 is modified to Phosphothreonine. Residue Asp471 is the Proton acceptor of the active site. The residue at position 504 (Ser504) is a Phosphoserine. The residue at position 505 (Thr505) is a Phosphothreonine; by autocatalysis. Tyr565 is subject to Phosphotyrosine. The 72-residue stretch at 602–673 folds into the AGC-kinase C-terminal domain; the sequence is KTINWNLLEK…VNPKYEQFLE (72 aa). Phosphoserine is present on residues Ser643, Ser652, and Ser662.

The protein belongs to the protein kinase superfamily. AGC Ser/Thr protein kinase family. PKC subfamily. In terms of assembly, interacts with PDPK1 (via N-terminal region). Interacts with RAD9A. Interacts with CDCP1. Interacts with MUC1. Interacts with VASP. Interacts with CAVIN3. Interacts with PRKD2 (via N-terminus and zing-finger domain 1 and 2) in response to oxidative stress; the interaction is independent of PRKD2 tyrosine phosphorylation. Interacts with PLSC3; interaction is enhanced by UV irradiation. Autophosphorylated and/or phosphorylated at Thr-505, within the activation loop; phosphorylation at Thr-505 is not a prerequisite for enzymatic activity. Autophosphorylated at Ser-299. Upon TNFSF10/TRAIL treatment, phosphorylated at Tyr-155; phosphorylation is required for its translocation to the endoplasmic reticulum and cleavage by caspase-3. Phosphorylated at Tyr-311, Tyr-332 and Tyr-565; phosphorylation of Tyr-311 and Tyr-565 following thrombin or zymosan stimulation potentiates its kinase activity. Phosphorylated by protein kinase PDPK1; phosphorylation is inhibited by the apoptotic C-terminal cleavage product of PKN2. Phosphorylated at Tyr-311 and Tyr-332 by SRC; phosphorylation leads to enhanced autophosphorylation at Thr-505. Phosphorylated at Tyr-311 through a SYK and SRC mechanism downstream of C-type lectin receptors activation, promoting its activation. In terms of processing, proteolytically cleaved into a catalytic subunit and a regulatory subunit by caspase-3 during apoptosis which results in kinase activation.

The protein localises to the cytoplasm. Its subcellular location is the nucleus. The protein resides in the perinuclear region. It is found in the cell membrane. It localises to the mitochondrion. The protein localises to the endomembrane system. It catalyses the reaction L-seryl-[protein] + ATP = O-phospho-L-seryl-[protein] + ADP + H(+). The enzyme catalyses L-threonyl-[protein] + ATP = O-phospho-L-threonyl-[protein] + ADP + H(+). It carries out the reaction L-tyrosyl-[protein] + ATP = O-phospho-L-tyrosyl-[protein] + ADP + H(+). Its activity is regulated as follows. Novel PKCs (PRKCD, PRKCE, PRKCH and PRKCQ) are calcium-insensitive, but activated by diacylglycerol (DAG) and phosphatidylserine. Three specific sites; Thr-505 (activation loop of the kinase domain), Ser-643 (turn motif) and Ser-662 (hydrophobic region), need to be phosphorylated for its full activation. Activated by caspase-3 (CASP3) cleavage during apoptosis. After cleavage, the pseudosubstrate motif in the regulatory subunit is released from the substrate recognition site of the catalytic subunit, which enables PRKCD to become constitutively activated. The catalytic subunit which displays properties of a sphingosine-dependent protein kinase is activated by D-erythro-sphingosine (Sph) or N,N-dimethyl-D-erythrosphingosine (DMS) or N,N,N-trimethyl-D-erythrosphingosine (TMS), but not by ceramide or Sph-1-P and is strongly inhibited by phosphatidylserine. Calcium-independent, phospholipid- and diacylglycerol (DAG)-dependent serine/threonine-protein kinase that plays contrasting roles in cell death and cell survival by functioning as a pro-apoptotic protein during DNA damage-induced apoptosis, but acting as an anti-apoptotic protein during cytokine receptor-initiated cell death, is involved in tumor suppression, is required for oxygen radical production by NADPH oxidase and acts as a positive or negative regulator in platelet functional responses. Upon DNA damage, activates the promoter of the death-promoting transcription factor BCLAF1/Btf to trigger BCLAF1-mediated p53/TP53 gene transcription and apoptosis. In response to oxidative stress, interact with and activate CHUK/IKKA in the nucleus, causing the phosphorylation of p53/TP53. In the case of ER stress or DNA damage-induced apoptosis, can form a complex with the tyrosine-protein kinase ABL1 which trigger apoptosis independently of p53/TP53. In cytosol can trigger apoptosis by activating MAPK11 or MAPK14, inhibiting AKT1 and decreasing the level of X-linked inhibitor of apoptosis protein (XIAP), whereas in nucleus induces apoptosis via the activation of MAPK8 or MAPK9. Upon ionizing radiation treatment, is required for the activation of the apoptosis regulators BAX and BAK, which trigger the mitochondrial cell death pathway. Can phosphorylate MCL1 and target it for degradation which is sufficient to trigger for BAX activation and apoptosis. Is required for the control of cell cycle progression both at G1/S and G2/M phases. Mediates phorbol 12-myristate 13-acetate (PMA)-induced inhibition of cell cycle progression at G1/S phase by up-regulating the CDK inhibitor CDKN1A/p21 and inhibiting the cyclin CCNA2 promoter activity. In response to UV irradiation can phosphorylate CDK1, which is important for the G2/M DNA damage checkpoint activation. Can protect glioma cells from the apoptosis induced by TNFSF10/TRAIL, probably by inducing increased phosphorylation and subsequent activation of AKT1. Can also act as tumor suppressor upon mitogenic stimulation with PMA or TPA. In N-formyl-methionyl-leucyl-phenylalanine (fMLP)-treated cells, is required for NCF1 (p47-phox) phosphorylation and activation of NADPH oxidase activity, and regulates TNF-elicited superoxide anion production in neutrophils, by direct phosphorylation and activation of NCF1 or indirectly through MAPK1/3 (ERK1/2) signaling pathways. Involved in antifungal immunity by mediating phosphorylation and activation of CARD9 downstream of C-type lectin receptors activation, promoting interaction between CARD9 and BCL10, followed by activation of NF-kappa-B and MAP kinase p38 pathways. May also play a role in the regulation of NADPH oxidase activity in eosinophil after stimulation with IL5, leukotriene B4 or PMA. In collagen-induced platelet aggregation, acts a negative regulator of filopodia formation and actin polymerization by interacting with and negatively regulating VASP phosphorylation. Downstream of PAR1, PAR4 and CD36/GP4 receptors, regulates differentially platelet dense granule secretion; acts as a positive regulator in PAR-mediated granule secretion, whereas it negatively regulates CD36/GP4-mediated granule release. Phosphorylates MUC1 in the C-terminal and regulates the interaction between MUC1 and beta-catenin. The catalytic subunit phosphorylates 14-3-3 proteins (YWHAB, YWHAZ and YWHAH) in a sphingosine-dependent fashion. Phosphorylates ELAVL1 in response to angiotensin-2 treatment. Phosphorylates mitochondrial phospholipid scramblase 3 (PLSCR3), resulting in increased cardiolipin expression on the mitochondrial outer membrane which facilitates apoptosis. Phosphorylates SMPD1 which induces SMPD1 secretion. In terms of biological role, truncated isoform 2 is inactive. The chain is Protein kinase C delta type from Rattus norvegicus (Rat).